Reading from the N-terminus, the 160-residue chain is MSTIPISKEGFAKIKAELASLKKERPEVIKAIAEAREEGDLKENGGYHAARERQGMLEAKINYIESRIPQFNVVDMTTLGGEKITFGATVTLEDIDTGAEKTYTIMGPDESDFKKGIISIESPVGKALLGKIEGDEVVVNAPKGKIEYGIVSVIFNGPIS.

The stretch at 14–38 (IKAELASLKKERPEVIKAIAEAREE) forms a coiled coil.

The protein belongs to the GreA/GreB family.

Functionally, necessary for efficient RNA polymerase transcription elongation past template-encoded arresting sites. The arresting sites in DNA have the property of trapping a certain fraction of elongating RNA polymerases that pass through, resulting in locked ternary complexes. Cleavage of the nascent transcript by cleavage factors such as GreA or GreB allows the resumption of elongation from the new 3'terminus. GreA releases sequences of 2 to 3 nucleotides. The chain is Transcription elongation factor GreA from Maridesulfovibrio salexigens (strain ATCC 14822 / DSM 2638 / NCIMB 8403 / VKM B-1763) (Desulfovibrio salexigens).